Consider the following 201-residue polypeptide: dTTP/UTP pyrophosphatase (201 aa).

Asp-79 (proton acceptor) is an active-site residue.

Belongs to the Maf family. YhdE subfamily. It depends on a divalent metal cation as a cofactor.

Its subcellular location is the cytoplasm. The enzyme catalyses dTTP + H2O = dTMP + diphosphate + H(+). It catalyses the reaction UTP + H2O = UMP + diphosphate + H(+). In terms of biological role, nucleoside triphosphate pyrophosphatase that hydrolyzes dTTP and UTP. May have a dual role in cell division arrest and in preventing the incorporation of modified nucleotides into cellular nucleic acids. This is dTTP/UTP pyrophosphatase from Hahella chejuensis (strain KCTC 2396).